We begin with the raw amino-acid sequence, 100 residues long: RING finger protein Z (100 aa).

Residue glycine 2 is the site of N-myristoyl glycine; by host attachment. The segment at 43–79 (CRCCWFANTNLIKCSDHYICLKCLNIMLGKSSFCDIC) adopts an RING-type; atypical zinc-finger fold. A PTAP/PSAP motif motif is present at residues 93–96 (PSAP).

The protein belongs to the arenaviridae Z protein family. Interacts with protein NP; this interaction probably directs the encapsidated genome to budding sites. Interacts (via RING domain) with polymerase L; this interaction inhibits viral transcription and replication, Z partially blocks the product exit tunnel for the releasing nascent RNA product. Interacts with the glycoprotein complex; this interaction plays a role in virion budding. Interacts with host eIF4E; this interaction results in eIF4E reduced affinity for its substrate, the 5'-m7 G cap structure. Interacts (via late-budding domain) with host TSG101; this interaction is essential for budding and release of viral particles. Interacts with host RPLP0; this interaction may serve to load ribosome-like particles inside the virion. Interacts with host PML; this interaction induces PML bodies redistribution in the cytoplasm upon viral infection. In terms of processing, myristoylation is required for the role of RING finger protein Z in assembly and budding.

The protein resides in the virion. The protein localises to the host cytoplasm. Its subcellular location is the host perinuclear region. It is found in the host cell membrane. Its function is as follows. Plays a crucial role in virion assembly and budding. Expressed late in the virus life cycle, it acts as an inhibitor of viral transcription and RNA synthesis by interacting with the viral polymerase L. Presumably recruits the NP encapsidated genome to cellular membranes at budding sites via direct interaction with NP. Plays critical roles in the final steps of viral release by interacting with host TSG101, a member of the vacuolar protein-sorting pathway and using other cellular host proteins involved in vesicle formation pathway. The budding of the virus progeny occurs after association of protein Z with the viral glycoprotein complex SSP-GP1-GP2 at the cell periphery, step that requires myristoylation of protein Z. Also selectively represses protein production by associating with host eIF4E. In cell-based minigenome assay, has an inhibitory effect on the ribonucleoprotein machinery (vRNP), which is responsible for the replication and transcription of the viral genome. In Homo sapiens (Human), this protein is RING finger protein Z.